A 207-amino-acid chain; its full sequence is Small ribosomal subunit protein uS4 (207 aa).

Residues 26 to 47 (AINNKNYKPGQQGNSSSISKPS) are disordered. Positions 28–39 (NNKNYKPGQQGN) are enriched in polar residues. The S4 RNA-binding domain occupies 95–158 (RRLDAVVYRL…KQIPIVIGAI (64 aa)).

This sequence belongs to the universal ribosomal protein uS4 family. In terms of assembly, part of the 30S ribosomal subunit. Contacts protein S5. The interaction surface between S4 and S5 is involved in control of translational fidelity.

In terms of biological role, one of the primary rRNA binding proteins, it binds directly to 16S rRNA where it nucleates assembly of the body of the 30S subunit. Its function is as follows. With S5 and S12 plays an important role in translational accuracy. The sequence is that of Small ribosomal subunit protein uS4 from Orientia tsutsugamushi (strain Boryong) (Rickettsia tsutsugamushi).